The chain runs to 309 residues: Probable non-structural 36.3 kDa protein (309 aa).

This is Probable non-structural 36.3 kDa protein (S6) from Avena sativa (Oat).